The primary structure comprises 108 residues: Nucleoid-associated protein Bmul_1447/BMULJ_01796 (108 aa).

The segment at 84 to 108 (EATSQEKMSGMTSGLPLPPGFKLPF) is disordered. Residues 85 to 95 (ATSQEKMSGMT) show a composition bias toward polar residues. The segment covering 99–108 (PLPPGFKLPF) has biased composition (pro residues).

The protein belongs to the YbaB/EbfC family. As to quaternary structure, homodimer.

It is found in the cytoplasm. Its subcellular location is the nucleoid. Functionally, binds to DNA and alters its conformation. May be involved in regulation of gene expression, nucleoid organization and DNA protection. The sequence is that of Nucleoid-associated protein Bmul_1447/BMULJ_01796 from Burkholderia multivorans (strain ATCC 17616 / 249).